The sequence spans 45 residues: DNA-directed RNA polymerase subunit Rpo12 (45 aa).

Cys8, Cys23, and Cys26 together coordinate Zn(2+).

The protein belongs to the archaeal Rpo12/eukaryotic RPC10 RNA polymerase subunit family. As to quaternary structure, part of the RNA polymerase complex. The cofactor is Zn(2+).

The protein localises to the cytoplasm. The catalysed reaction is RNA(n) + a ribonucleoside 5'-triphosphate = RNA(n+1) + diphosphate. Functionally, DNA-dependent RNA polymerase (RNAP) catalyzes the transcription of DNA into RNA using the four ribonucleoside triphosphates as substrates. This is DNA-directed RNA polymerase subunit Rpo12 from Methanocella arvoryzae (strain DSM 22066 / NBRC 105507 / MRE50).